An 842-amino-acid polypeptide reads, in one-letter code: Type VI secretion system spike protein VgrG2a (842 aa).

The tract at residues 265–291 is disordered; the sequence is RSGAGRPFSESRLRGHRRDARVASVSG.

Belongs to the VgrG protein family.

Functionally, part of the H2 type VI secretion system (H2-T6SS) specialized secretion system, which delivers several virulence factors in both prokaryotic and eukaryotic cells during infection. May form the spike at the tip of the elongating tube formed by haemolysin co-regulated protein 2a/Hcp2a. In turn, may allow the delivery of the Tle4 antibacterial toxin to target cells where it exerts its toxicity. Also promotes the release of VgrG2b toxin to the host cell. In Pseudomonas aeruginosa (strain ATCC 15692 / DSM 22644 / CIP 104116 / JCM 14847 / LMG 12228 / 1C / PRS 101 / PAO1), this protein is Type VI secretion system spike protein VgrG2a.